A 232-amino-acid polypeptide reads, in one-letter code: Large ribosomal subunit protein uL1 (232 aa).

The protein belongs to the universal ribosomal protein uL1 family. Part of the 50S ribosomal subunit.

Functionally, binds directly to 23S rRNA. The L1 stalk is quite mobile in the ribosome, and is involved in E site tRNA release. Its function is as follows. Protein L1 is also a translational repressor protein, it controls the translation of the L11 operon by binding to its mRNA. The chain is Large ribosomal subunit protein uL1 from Burkholderia cenocepacia (strain HI2424).